The sequence spans 561 residues: DNA ligase B (561 aa).

K125 acts as the N6-AMP-lysine intermediate in catalysis.

Belongs to the NAD-dependent DNA ligase family. LigB subfamily.

It carries out the reaction NAD(+) + (deoxyribonucleotide)n-3'-hydroxyl + 5'-phospho-(deoxyribonucleotide)m = (deoxyribonucleotide)n+m + AMP + beta-nicotinamide D-nucleotide.. In terms of biological role, catalyzes the formation of phosphodiester linkages between 5'-phosphoryl and 3'-hydroxyl groups in double-stranded DNA using NAD as a coenzyme and as the energy source for the reaction. This is DNA ligase B from Escherichia coli O127:H6 (strain E2348/69 / EPEC).